Consider the following 549-residue polypeptide: Cytoplasmic trehalase (549 aa).

Residues R168, 175 to 176 (WD), N212, 221 to 223 (RSQ), 292 to 294 (RDE), and G324 each bind substrate. Catalysis depends on proton donor/acceptor residues D326 and E509. E525 provides a ligand contact to substrate.

Belongs to the glycosyl hydrolase 37 family. Monomer.

It is found in the cytoplasm. The catalysed reaction is alpha,alpha-trehalose + H2O = alpha-D-glucose + beta-D-glucose. Its pathway is glycan degradation; trehalose degradation; D-glucose from alpha,alpha-trehalose: step 1/1. Its function is as follows. Hydrolyzes trehalose to glucose. Could be involved, in cells returning to low osmolarity conditions, in the utilization of the accumulated cytoplasmic trehalose, which was synthesized in response to high osmolarity. This chain is Cytoplasmic trehalase, found in Escherichia coli O81 (strain ED1a).